Consider the following 1048-residue polypeptide: FERM, ARHGEF and pleckstrin domain-containing protein 1 (1048 aa).

The segment at 1 to 37 is disordered; sequence MGEIEQKPTPASRLGAPENSGISTLERGQKPPPTPSG. A phosphoserine mark is found at Ser-20 and Ser-23. Position 24 is a phosphothreonine (Thr-24). Residues 40-320 form the FERM domain; sequence MTVKIQMLDD…EHHAFFRLFE (281 aa). Residues Ser-340, Ser-373, Ser-389, Ser-403, Ser-427, Ser-433, and Ser-437 each carry the phosphoserine modification. The disordered stretch occupies residues 361-536; it reads FERKHSKIHS…TDDEEEGRRK (176 aa). The segment covering 371 to 395 has biased composition (polar residues); that stretch reads TRSLVSQPTAPNSEVPKQSPQSASL. Composition is skewed to polar residues over residues 472–491 and 498–513; these read STGS…NSQG and VTLS…QASP. A phosphoserine mark is found at Ser-512 and Ser-516. Residues 542–733 form the DH domain; that stretch reads KAYYIAKEVS…TEMVAQLHGT (192 aa). Residues 762–859 form the PH 1 domain; the sequence is EFIRLGSLSK…WMEDIQMAID (98 aa). 3 positions are modified to phosphoserine: Ser-836, Ser-875, and Ser-881. Residues 865–907 form a disordered region; it reads NGPTPELLASSPPDNKSPDEATAADQESEDDLSASRTSLERQA. Thr-886 carries the phosphothreonine modification. A phosphoserine mark is found at Ser-892, Ser-899, and Ser-902. Residues 935–1032 enclose the PH 2 domain; the sequence is ENQLSGNLLR…WMEVIRSATS (98 aa).

In terms of assembly, interacts with CADM1. Interacts with RAC1. Detected in brain cortex, hippocampus, striatum, olfactory bulb, cerebellum and hindbrain (at protein level).

The protein resides in the cell membrane. It localises to the synapse. It is found in the synaptosome. Its subcellular location is the cytoplasm. The protein localises to the cytosol. The protein resides in the cell projection. It localises to the filopodium. It is found in the dendrite. Its subcellular location is the dendritic spine. In terms of biological role, functions as a guanine nucleotide exchange factor for RAC1. May play a role in semaphorin signaling. Plays a role in the assembly and disassembly of dendritic filopodia, the formation of dendritic spines, regulation of dendrite length and ultimately the formation of synapses. The sequence is that of FERM, ARHGEF and pleckstrin domain-containing protein 1 (Farp1) from Mus musculus (Mouse).